Reading from the N-terminus, the 102-residue chain is Nucleoid-associated protein WS1681 (102 aa).

This sequence belongs to the YbaB/EbfC family. In terms of assembly, homodimer.

Its subcellular location is the cytoplasm. It localises to the nucleoid. Its function is as follows. Binds to DNA and alters its conformation. May be involved in regulation of gene expression, nucleoid organization and DNA protection. The chain is Nucleoid-associated protein WS1681 from Wolinella succinogenes (strain ATCC 29543 / DSM 1740 / CCUG 13145 / JCM 31913 / LMG 7466 / NCTC 11488 / FDC 602W) (Vibrio succinogenes).